A 318-amino-acid chain; its full sequence is Phospholipid scramblase 1 (318 aa).

Residues 1-14 are compositionally biased toward polar residues; the sequence is MDKQNSQMNASHPE. The tract at residues 1 to 64 is disordered; that stretch reads MDKQNSQMNA…GPGPAGFPVP (64 aa). Residues 1–84 are proline-rich domain (PRD); that stretch reads MDKQNSQMNA…NQPVGAAGVP (84 aa). Over 1–288 the chain is Cytoplasmic; the sequence is MDKQNSQMNA…IQFPLDLDVK (288 aa). Residues 18 to 26 carry the SH3-binding 1 motif; it reads PVGYPPQYP. 2 consecutive short sequence motifs (PPXY motif) follow at residues 22–25 and 33–36; these read PPQY and PPGY. Residues 31–44 are compositionally biased toward low complexity; it reads QGPPGYSGYPGPQV. Positions 42–50 match the SH3-binding 2 motif; that stretch reads PQVSYPPPP. Residues tyrosine 69 and tyrosine 74 each carry the phosphotyrosine; by ABL modification. The short motif at 84–92 is the SH3-binding 3 element; the sequence is PWMPAPQPP. Positions 99–290 are interaction with hepatitis C virus E2 glycoprotein; the sequence is LEYLSQIDQI…FPLDLDVKMK (192 aa). Position 161 is a phosphothreonine; by PKC/PRKCD (threonine 161). Residues cysteine 184, cysteine 185, cysteine 186, cysteine 188, and cysteine 189 are each lipidated (S-palmitoyl cysteine). The short motif at 257–266 is the Nuclear localization signal element; that stretch reads GKISKHWTGI. A helical transmembrane segment spans residues 289 to 305; it reads MKAVMIGACFLIDFMFF. The Extracellular segment spans residues 306–318; that stretch reads ESTGSQEQKSGVW.

This sequence belongs to the phospholipid scramblase family. In terms of assembly, forms homooligomers in the presence of calcium. Interacts with ABL. Interacts with RELT, RELL1 and RELL2. Interacts with OXSR1 in the presence of RELT. Interacts with TOP2A and TOP2B. Interacts with OCLN. Interacts with TRPC5. Interacts with TRPC1 and TRPC4. Interacts with ILDR1. (Microbial infection) Interacts with hepatitis C virus E1 and E2 glycoproteins. As to quaternary structure, (Microbial infection) Interacts with T-cell leukemia virus (HTLV)-1 protein Tax (via N-terminus); this interaction represses Tax homodimerization. In terms of assembly, (Microbial infection) Interacts with HIV-1 protein Tat; this interaction represses the Tat-dependent transactivation of the HIV-1 long terminal repeat (LTR) and reduces the nuclear translocation of Tat. (Microbial infection) Interacts with hepatitis B virus protein HBx; this interaction promotes the proteasomal degradation of HBx. As to quaternary structure, (Microbial infection) Interacts with human cytomegalovirus proteins IE1 and IE2. In terms of assembly, (Microbial infection) Interacts with Epstein Barr virus (EBV) lytic switch protein BZLF1; this interaction negatively regulates the transcriptional regulatory activity of BZLF1 by preventing the formation of the BZLF1-CBP complex. (Microbial infection) Interacts with influenza virus nucleoprotein NP. Ca(2+) is required as a cofactor. It depends on Mg(2+) as a cofactor. The cofactor is Zn(2+). In terms of processing, phosphorylation at Thr-161 by PKC/PKCD increases its phospholipid scramblase activity during both cell stimulation and apoptosis. Phosphorylated by OXSR1 in the presence of RELT. Post-translationally, palmitoylation is required for its phospholipid scramblase activity. Palmitoylation regulates its localization to the cell membrane or the nucleus; trafficking to the cell membrane is dependent upon palmitoylation whereas in the absence of palmitoylation, localizes to the nucleus. In terms of tissue distribution, expressed in platelets, erythrocyte membranes, lymphocytes, spleen, thymus, prostate, testis, uterus, intestine, colon, heart, placenta, lung, liver, kidney and pancreas. Not detected in brain and skeletal muscle.

The protein resides in the cell membrane. It localises to the nucleus. It is found in the cytoplasm. Its subcellular location is the perinuclear region. The enzyme catalyses a 1,2-diacyl-sn-glycero-3-phosphocholine(in) = a 1,2-diacyl-sn-glycero-3-phosphocholine(out). The catalysed reaction is a 1,2-diacyl-sn-glycero-3-phosphoethanolamine(in) = a 1,2-diacyl-sn-glycero-3-phosphoethanolamine(out). It catalyses the reaction a 1,2-diacyl-sn-glycero-3-phospho-L-serine(in) = a 1,2-diacyl-sn-glycero-3-phospho-L-serine(out). Its activity is regulated as follows. Activated by Pb(2+) and Hg(2+) ions. Phosphorylation at Thr-161 by PKC/PKCD increases its phospholipid scramblase activity during both cell stimulation and apoptosis. Its function is as follows. Catalyzes calcium-induced ATP-independent rapid bidirectional and non-specific movement of phospholipids (lipid scrambling or lipid flip-flop) between the inner and outer leaflet of the plasma membrane resulting in collapse of the phospholipid asymmetry which leads to phosphatidylserine externalization on the cell surface. Mediates calcium-dependent phosphatidylserine externalization and apoptosis in neurons via its association with TRPC5. Also exhibits magnesium-dependent nuclease activity against double-stranded DNA and RNA but not single-stranded DNA and can enhance DNA decatenation mediated by TOP2A. Negatively regulates FcR-mediated phagocytosis in differentiated macrophages. May contribute to cytokine-regulated cell proliferation and differentiation. May play a role in the antiviral response of interferon (IFN) by amplifying and enhancing the IFN response through increased expression of select subset of potent antiviral genes. Inhibits the functions of viral transactivators, including human T-cell leukemia virus (HTLV)-1 protein Tax, human immunodeficiency virus (HIV)-1 Tat, human hepatitis B virus (HBV) HBx, Epstein-Barr virus (EBV) BZLF1 and human cytomegalovirus IE1 and IE2 proteins through direct interactions. Also mediates the inhibition of influenza virus infection by preventing nuclear import of the viral nucleoprotein/NP. Plays a crucial role as a defense factor against SARS-CoV-2 independently of its scramblase activity by directly targeting nascent viral vesicles to prevent virus-membrane fusion and the release of viral RNA into the host-cell cytosol. In terms of biological role, (Microbial infection) Acts as an attachment receptor for HCV. In Homo sapiens (Human), this protein is Phospholipid scramblase 1 (PLSCR1).